We begin with the raw amino-acid sequence, 154 residues long: UPF0756 membrane protein EAT1b_0668 (154 aa).

The next 5 helical transmembrane spans lie at 5-25 (LFLL…VIIA), 52-72 (WGVT…DIGF), 82-102 (PVGI…GQGV), 107-127 (VDPV…GFMK), and 129-149 (IPVG…GYQV).

It belongs to the UPF0756 family.

It localises to the cell membrane. The sequence is that of UPF0756 membrane protein EAT1b_0668 from Exiguobacterium sp. (strain ATCC BAA-1283 / AT1b).